A 277-amino-acid polypeptide reads, in one-letter code: Caspase-3 (277 aa).

Methionine 1 carries the post-translational modification N-acetylmethionine. 2 propeptides span residues 1–9 and 10–28; these read MENTENSVD and SKSI…QSMD. The span at 1–10 shows a compositional bias: polar residues; sequence MENTENSVDS. Residues 1–20 are disordered; the sequence is MENTENSVDSKSIKNLEPKI. Position 11 is an N6-acetyllysine (lysine 11). Residues 11–20 are compositionally biased toward basic and acidic residues; it reads KSIKNLEPKI. A Phosphoserine modification is found at serine 26. Catalysis depends on residues histidine 121 and cysteine 163. Cysteine 163 carries the post-translational modification S-nitrosocysteine; in inhibited form.

This sequence belongs to the peptidase C14A family. As to quaternary structure, heterotetramer that consists of two anti-parallel arranged heterodimers, each one formed by a 17 kDa (p17) and a 12 kDa (p12) subunit. Interacts with BIRC6/bruce. Cleavage by granzyme B, caspase-6, caspase-8 and caspase-10 generates the two active subunits. Additional processing of the propeptides is likely due to the autocatalytic activity of the activated protease. Active heterodimers between the small subunit of caspase-7 protease and the large subunit of caspase-3 also occur and vice versa. Post-translationally, S-nitrosylated on its catalytic site cysteine in unstimulated cell lines and denitrosylated upon activation of the Fas apoptotic pathway, associated with an increase in intracellular caspase activity. Fas therefore activates caspase-3 not only by inducing the cleavage of the caspase zymogen to its active subunits, but also by stimulating the denitrosylation of its active site thiol. In terms of processing, ubiquitinated by BIRC6; this activity is inhibited by DIABLO/SMAC.

It localises to the cytoplasm. The enzyme catalyses Strict requirement for an Asp residue at positions P1 and P4. It has a preferred cleavage sequence of Asp-Xaa-Xaa-Asp-|- with a hydrophobic amino-acid residue at P2 and a hydrophilic amino-acid residue at P3, although Val or Ala are also accepted at this position.. With respect to regulation, inhibited by BIRC6; following inhibition of BIRC6-caspase binding by DIABLO/SMAC, BIRC6 is subjected to caspase cleavage, leading to an increase in active caspases. In terms of biological role, involved in the activation cascade of caspases responsible for apoptosis execution. At the onset of apoptosis, it proteolytically cleaves poly(ADP-ribose) polymerase PARP1 at a '216-Asp-|-Gly-217' bond. Cleaves and activates sterol regulatory element binding proteins (SREBPs) between the basic helix-loop-helix leucine zipper domain and the membrane attachment domain. Cleaves and activates caspase-6, -7 and -9 (CASP6, CASP7 and CASP9, respectively). Cleaves and inactivates interleukin-18 (IL18). Triggers cell adhesion in sympathetic neurons through RET cleavage. Cleaves IL-1 beta between an Asp and an Ala, releasing the mature cytokine which is involved in a variety of inflammatory processes. Cleaves and inhibits serine/threonine-protein kinase AKT1 in response to oxidative stress. Acts as an inhibitor of type I interferon production during virus-induced apoptosis by mediating cleavage of antiviral proteins CGAS, IRF3 and MAVS, thereby preventing cytokine overproduction. Also involved in pyroptosis by mediating cleavage and activation of gasdermin-E (GSDME). Cleaves XRCC4 and phospholipid scramblase proteins XKR4, XKR8 and XKR9, leading to promote phosphatidylserine exposure on apoptotic cell surface. Cleaves BIRC6 following inhibition of BIRC6-caspase binding by DIABLO/SMAC. The polypeptide is Caspase-3 (CASP3) (Pan troglodytes (Chimpanzee)).